The primary structure comprises 100 residues: Integration host factor subunit alpha (100 aa).

Residues 53–72 form a disordered region; that stretch reads FQLRDKPQRPGRNPKTGEEV.

It belongs to the bacterial histone-like protein family. In terms of assembly, heterodimer of an alpha and a beta chain.

In terms of biological role, this protein is one of the two subunits of integration host factor, a specific DNA-binding protein that functions in genetic recombination as well as in transcriptional and translational control. The protein is Integration host factor subunit alpha of Neisseria meningitidis serogroup C (strain 053442).